A 270-amino-acid chain; its full sequence is Glutamate 5-kinase (270 aa).

Lys15 is a binding site for ATP. Ser55, Asp142, and Asn158 together coordinate substrate. ATP is bound by residues 178 to 179 (SD) and 220 to 226 (TGGMLSK).

This sequence belongs to the glutamate 5-kinase family.

It localises to the cytoplasm. The catalysed reaction is L-glutamate + ATP = L-glutamyl 5-phosphate + ADP. It functions in the pathway amino-acid biosynthesis; L-proline biosynthesis; L-glutamate 5-semialdehyde from L-glutamate: step 1/2. Its function is as follows. Catalyzes the transfer of a phosphate group to glutamate to form L-glutamate 5-phosphate. In Streptococcus uberis (strain ATCC BAA-854 / 0140J), this protein is Glutamate 5-kinase.